A 1246-amino-acid polypeptide reads, in one-letter code: Stromal processing peptidase, chloroplastic (1246 aa).

The transit peptide at 1 to 136 directs the protein to the chloroplast; the sequence is MASFPSPPLA…AKIRRRHVLH (136 aa). Histidine 228 provides a ligand contact to Zn(2+). Residue glutamate 231 is the Proton acceptor of the active site. Residue histidine 232 coordinates Zn(2+). Glutamate 302 is an active-site residue. Glutamate 309 is a Zn(2+) binding site.

The protein belongs to the peptidase M16 family. The cofactor is Zn(2+).

It is found in the plastid. The protein localises to the chloroplast stroma. Cleaves presequences (transit peptides) from chloroplastic protein precursors. Initially recognizes a precursor by binding to the C-terminus of its transit peptide and then removes the transit peptide in a single endoproteolytic step. In a next step, pursues the cleavage of transit peptide to a subfragment form. The polypeptide is Stromal processing peptidase, chloroplastic (Oryza sativa subsp. japonica (Rice)).